Reading from the N-terminus, the 551-residue chain is Rhodopsin kinase grk7-a (551 aa).

Serine 36 carries the phosphoserine modification. The 118-residue stretch at 57 to 174 (YQSICVEQPI…QNSPFYDRFL (118 aa)) folds into the RGS domain. One can recognise a Protein kinase domain in the interval 189-451 (FYEFRILGKG…DDDPRKHAFF (263 aa)). ATP is bound by residues 195 to 203 (LGKGGFGEV) and lysine 218. The Proton acceptor role is filled by aspartate 314. The region spanning 452-517 (KSINFQRLEA…GAIPISWQKE (66 aa)) is the AGC-kinase C-terminal domain. Phosphoserine is present on serine 487. The segment at 529–551 (DPSREATGGGGNSGEKSGVCSIL) is disordered. The segment covering 542–551 (GEKSGVCSIL) has biased composition (low complexity). Cysteine methyl ester is present on cysteine 548. Cysteine 548 carries S-geranylgeranyl cysteine lipidation. Positions 549 to 551 (SIL) are cleaved as a propeptide — removed in mature form.

It belongs to the protein kinase superfamily. AGC Ser/Thr protein kinase family. GPRK subfamily. In terms of processing, autophosphorylated in vitro at Ser-487. Phosphorylation at Ser-36 is regulated by light and activated by cAMP.

Its subcellular location is the membrane. It carries out the reaction L-threonyl-[rhodopsin] + ATP = O-phospho-L-threonyl-[rhodopsin] + ADP + H(+). It catalyses the reaction L-seryl-[rhodopsin] + ATP = O-phospho-L-seryl-[rhodopsin] + ADP + H(+). Functionally, retina-specific kinase involved in the shutoff of the photoresponse and adaptation to changing light conditions via cone opsin phosphorylation, including rhodopsin (RHO). The protein is Rhodopsin kinase grk7-a (grk7-a) of Xenopus laevis (African clawed frog).